Here is a 140-residue protein sequence, read N- to C-terminus: Sex-regulated protein janus-B (140 aa).

Substrate is bound at residue arginine 42. Catalysis depends on histidine 69, which acts as the Proton acceptor. A substrate-binding site is contributed by 110-112 (SRT).

The protein belongs to the janus family.

Functionally, janA and janB regulate somatic sex differentiation. This Drosophila yakuba (Fruit fly) protein is Sex-regulated protein janus-B (janB).